Consider the following 521-residue polypeptide: Probable glycogen synthase (521 aa).

This sequence belongs to the glycosyltransferase 1 family. Bacterial/plant glycogen synthase subfamily.

It carries out the reaction [(1-&gt;4)-alpha-D-glucosyl](n) + ADP-alpha-D-glucose = [(1-&gt;4)-alpha-D-glucosyl](n+1) + ADP + H(+). The protein operates within glycan biosynthesis; glycogen biosynthesis. Its function is as follows. Synthesizes alpha-1,4-glucan chains using ADP-glucose. The polypeptide is Probable glycogen synthase (glgA) (Methanocaldococcus jannaschii (strain ATCC 43067 / DSM 2661 / JAL-1 / JCM 10045 / NBRC 100440) (Methanococcus jannaschii)).